Consider the following 594-residue polypeptide: Maternal effect protein oskar (594 aa).

A compositionally biased stretch (low complexity) spans 44-62 (QQQPKQQQQQQQHQSQHQH). The segment at 44–68 (QQQPKQQQQQQQHQSQHQHQQQKQK) is disordered. Positions 174–243 (EYPDIDTEIR…SGKRIFNIKP (70 aa)) constitute an HTH OST-type domain.

In terms of assembly, interacts with smaug (smg). As to expression, posterior pole of the oocyte.

Organizes the germ plasm and directs localization of the posterior determinant nanos. Oskar protein is required to keep oskar RNA and staufen protein at the posterior pole. The sequence is that of Maternal effect protein oskar (osk) from Drosophila virilis (Fruit fly).